The chain runs to 475 residues: MELDAILDNLSDEEQIELLELLEEEENYRNTHLLYEFTPYSKQREFIDAGHDYQSDVLWLVTSLVSHLLALLKSRFTLPGDTRERKVIRLMVNMAESGKVSVSMSQLSSGIGGETNETVTKTTQRILCGRIEENDEPGYGSPKEDSSWEKSSVLLILLIIFSLSHHRLMVLKMHSICYFKHTRRHRHAAGDTITAYGLTKRLPYSIYAEGLTRTNKYGQFSILTFTPLMGMSDGVTKFLKNPSKSQKVVNMTIYDAEHYTDEQKEQIIASYPEHEREARARGIPTMGSGRIFQIPEETIKCQPFECPDHFYVIDAQDFGWNHPQAHIQLWWDKDADVFYLARVWKKSENTAVQAWGAVKSWANKIPVAWPHDGHQHEKGGGEQLKTQYADAGFSMLPDHATFPDGGNSVESGISELRDLMLEGRFKVFNTCEPFFEEFRLYHRDENGKIVKTNDDVLDATRYGYMMRLRQDDARY.

The tract at residues 1-58 (MELDAILDNLSDEEQIELLELLEEEENYRNTHLLYEFTPYSKQREFIDAGHDYQSDVL) is interaction with the terminase small subunit. The ATPase activity stretch occupies residues 1-282 (MELDAILDNL…EHEREARARG (282 aa)). Residues 308–475 (DHFYVIDAQD…MRLRQDDARY (168 aa)) form a nuclease activity region. Asp-317 and Asp-455 together coordinate Mg(2+).

It belongs to the Lederbergvirus large terminase family. In terms of assembly, interacts with the terminase small subunit; the active complex is composed of dimer of terminase large subunits and a nonamer ring of terminase small subunits. Interacts with the portal protein; this interaction allows the packaging of viral DNA. Requires Mg(2+) as cofactor.

In terms of biological role, the terminase large subunit acts as an ATP driven molecular motor necessary for viral DNA translocation into empty capsids and as an endonuclease that cuts the viral genome to initiate and to end a packaging reaction. The terminase lies at a unique vertex of the procapsid and is composed of two subunits, a small terminase subunit involved in viral DNA recognition (packaging 'pac' sequence), and a large terminase subunit possessing endonucleolytic and ATPase activities. Both terminase subunits heterooligomerize and are docked on the portal protein to form the packaging machine. The terminase large subunit exhibits endonuclease activity and cleaves the viral genome concatemer once the capsid is full (headful packaging). Once the capsid is packaged with the DNA, the terminase complex is substituted by the tail. The sequence is that of Terminase, large subunit (2) from Salmonella (Bacteriophage LP7).